The following is a 344-amino-acid chain: Heat-inducible transcription repressor HrcA (344 aa).

This sequence belongs to the HrcA family.

Negative regulator of class I heat shock genes (grpE-dnaK-dnaJ and groELS operons). Prevents heat-shock induction of these operons. In Streptococcus pneumoniae (strain 70585), this protein is Heat-inducible transcription repressor HrcA.